The primary structure comprises 257 residues: Thiazole synthase (257 aa).

The active-site Schiff-base intermediate with DXP is the K96. Residues G157, 184-185, and 206-207 contribute to the 1-deoxy-D-xylulose 5-phosphate site; these read AG and NT.

The protein belongs to the ThiG family. Homotetramer. Forms heterodimers with either ThiH or ThiS.

The protein localises to the cytoplasm. The enzyme catalyses [ThiS sulfur-carrier protein]-C-terminal-Gly-aminoethanethioate + 2-iminoacetate + 1-deoxy-D-xylulose 5-phosphate = [ThiS sulfur-carrier protein]-C-terminal Gly-Gly + 2-[(2R,5Z)-2-carboxy-4-methylthiazol-5(2H)-ylidene]ethyl phosphate + 2 H2O + H(+). Its pathway is cofactor biosynthesis; thiamine diphosphate biosynthesis. Catalyzes the rearrangement of 1-deoxy-D-xylulose 5-phosphate (DXP) to produce the thiazole phosphate moiety of thiamine. Sulfur is provided by the thiocarboxylate moiety of the carrier protein ThiS. In vitro, sulfur can be provided by H(2)S. The polypeptide is Thiazole synthase (Bartonella quintana (strain Toulouse) (Rochalimaea quintana)).